We begin with the raw amino-acid sequence, 466 residues long: Adenosylhomocysteinase (466 aa).

The substrate site is built by Thr-57, Asp-132, and Glu-192. An NAD(+)-binding site is contributed by 193-195 (TTT). The substrate site is built by Lys-222 and Asp-226. Residues Asn-227, 256 to 261 (GYGDVG), Glu-279, Asn-314, 335 to 337 (IGH), and Asn-380 each bind NAD(+).

This sequence belongs to the adenosylhomocysteinase family. Requires NAD(+) as cofactor.

Its subcellular location is the cytoplasm. It carries out the reaction S-adenosyl-L-homocysteine + H2O = L-homocysteine + adenosine. It functions in the pathway amino-acid biosynthesis; L-homocysteine biosynthesis; L-homocysteine from S-adenosyl-L-homocysteine: step 1/1. Its function is as follows. May play a key role in the regulation of the intracellular concentration of adenosylhomocysteine. This is Adenosylhomocysteinase from Rhizobium etli (strain ATCC 51251 / DSM 11541 / JCM 21823 / NBRC 15573 / CFN 42).